Here is a 147-residue protein sequence, read N- to C-terminus: MALKRINKELTDLGRDPPSSCSAGPVGEDLFHWQATIMGPSDSPYAGGVFFLAIHFPTDYPFKPPKVNFTTRIYHPNINSNGSICLDILRDQWSPALTISKVLLSICSMLTDPNPDDPLVPEIAHVYKTARAQYESTAREWTRKYAI.

One can recognise a UBC core domain in the interval 1 to 147; it reads MALKRINKEL…AREWTRKYAI (147 aa). Cys-107 (glycyl thioester intermediate) is an active-site residue.

The protein belongs to the ubiquitin-conjugating enzyme family.

It catalyses the reaction S-ubiquitinyl-[E1 ubiquitin-activating enzyme]-L-cysteine + [E2 ubiquitin-conjugating enzyme]-L-cysteine = [E1 ubiquitin-activating enzyme]-L-cysteine + S-ubiquitinyl-[E2 ubiquitin-conjugating enzyme]-L-cysteine.. Its pathway is protein modification; protein ubiquitination. Its function is as follows. Catalyzes the covalent attachment of ubiquitin to other proteins. The chain is Ubiquitin-conjugating enzyme E2-16 kDa (UBC1) from Pyricularia oryzae (strain 70-15 / ATCC MYA-4617 / FGSC 8958) (Rice blast fungus).